We begin with the raw amino-acid sequence, 82 residues long: Photosystem I iron-sulfur center (82 aa).

4Fe-4S ferredoxin-type domains lie at 2–31 (AHTV…MVPW) and 40–69 (IAAA…IRVY). Residues Cys-11, Cys-14, Cys-17, Cys-21, Cys-49, Cys-52, Cys-55, and Cys-59 each contribute to the [4Fe-4S] cluster site.

As to quaternary structure, the cyanobacterial PSI reaction center is composed of one copy each of PsaA,B,C,D,E,F,I,J,K,L,M and X, and forms trimeric complexes. Requires [4Fe-4S] cluster as cofactor.

Its subcellular location is the cellular thylakoid membrane. It catalyses the reaction reduced [plastocyanin] + hnu + oxidized [2Fe-2S]-[ferredoxin] = oxidized [plastocyanin] + reduced [2Fe-2S]-[ferredoxin]. Its function is as follows. Apoprotein for the two 4Fe-4S centers FA and FB of photosystem I (PSI); essential for photochemical activity. FB is the terminal electron acceptor of PSI, donating electrons to ferredoxin. The C-terminus interacts with PsaA/B/D and helps assemble the protein into the PSI complex. Required for binding of PsaD and PsaE to PSI. PSI is a plastocyanin/cytochrome c6-ferredoxin oxidoreductase, converting photonic excitation into a charge separation, which transfers an electron from the donor P700 chlorophyll pair to the spectroscopically characterized acceptors A0, A1, FX, FA and FB in turn. The protein is Photosystem I iron-sulfur center of Synechococcus sp. (strain JA-3-3Ab) (Cyanobacteria bacterium Yellowstone A-Prime).